The following is a 327-amino-acid chain: E3 ubiquitin ligase Rnf121 (327 aa).

Helical transmembrane passes span 50-70 (MHAE…LLLV), 79-96 (SYNM…VYFT), 99-119 (LHWW…AFVT), 148-168 (ATGI…NLLF), and 173-193 (EDAM…GVLG). The segment at 226–276 (CAVCGQQIFVDVNEEGIIENTYRLSCNHVFHEFCIRGWCIVGKKQTCPYCK) adopts an RING-type; atypical zinc-finger fold.

This sequence belongs to the RNF121 family.

It is found in the endoplasmic reticulum membrane. It carries out the reaction S-ubiquitinyl-[E2 ubiquitin-conjugating enzyme]-L-cysteine + [acceptor protein]-L-lysine = [E2 ubiquitin-conjugating enzyme]-L-cysteine + N(6)-ubiquitinyl-[acceptor protein]-L-lysine.. It functions in the pathway protein modification; protein ubiquitination. In terms of biological role, E3 ubiquitin ligase which accepts ubiquitin and transfers it to substrates thereby promoting their degradation by the endoplasmic reticulum-associated degradation (ERAD) pathway which is a pathway involved in ubiquitin-dependent degradation of misfolded endoplasmic reticulum proteins. May regulate the unfolded protein response to reduce endoplasmic reticulum stress. This is E3 ubiquitin ligase Rnf121 (rnf121) from Xenopus tropicalis (Western clawed frog).